The following is a 257-amino-acid chain: Urease accessory protein UreD (257 aa).

The protein belongs to the UreD family. UreD, UreF and UreG form a complex that acts as a GTP-hydrolysis-dependent molecular chaperone, activating the urease apoprotein by helping to assemble the nickel containing metallocenter of UreC. The UreE protein probably delivers the nickel.

It localises to the cytoplasm. Its function is as follows. Required for maturation of urease via the functional incorporation of the urease nickel metallocenter. The protein is Urease accessory protein UreD of Sporosarcina pasteurii (Bacillus pasteurii).